A 543-amino-acid chain; its full sequence is Oxalate--CoA ligase (543 aa).

Residue 196 to 207 (HTSGTTSTPKTV) coordinates ATP. The FACS motif lies at 410 to 458 (ENYFRTGDQGYFDPEGFLVLTGRIKELINRGGEKISPIELDGIMLSHPK). Positions 541–543 (SKL) match the C-terminal peroxisome targeting signal (PTS1) motif.

It belongs to the ATP-dependent AMP-binding enzyme family. Interacts with PEX5.

It is found in the peroxisome matrix. Its subcellular location is the peroxisome membrane. The enzyme catalyses oxalate + ATP + CoA = oxalyl-CoA + AMP + diphosphate. Its function is as follows. Catalyzes the first step in a degradation pathway of oxalate to CO(2) to protect the cell against the harmful effects of oxalate derived from endogenous processes or an environmental sources. The polypeptide is Oxalate--CoA ligase (Saccharomyces cerevisiae (strain ATCC 204508 / S288c) (Baker's yeast)).